Here is a 320-residue protein sequence, read N- to C-terminus: L-lactate dehydrogenase 1 (320 aa).

NAD(+) is bound by residues Val18, Asp39, Arg44, Tyr69, and 83 to 84 (GA). Residues Gln86 and Arg92 each coordinate substrate. NAD(+)-binding positions include Ser105, 122-124 (AAN), and Ser147. Position 124–127 (124–127 (NPVD)) interacts with substrate. A substrate-binding site is contributed by 152 to 155 (DSSR). His179 functions as the Proton acceptor in the catalytic mechanism. The residue at position 223 (Tyr223) is a Phosphotyrosine. Thr232 lines the substrate pocket.

The protein belongs to the LDH/MDH superfamily. LDH family. As to quaternary structure, homotetramer.

Its subcellular location is the cytoplasm. It catalyses the reaction (S)-lactate + NAD(+) = pyruvate + NADH + H(+). It participates in fermentation; pyruvate fermentation to lactate; (S)-lactate from pyruvate: step 1/1. In terms of biological role, catalyzes the conversion of lactate to pyruvate. The sequence is that of L-lactate dehydrogenase 1 from Lactiplantibacillus plantarum (strain ATCC BAA-793 / NCIMB 8826 / WCFS1) (Lactobacillus plantarum).